The following is a 334-amino-acid chain: Cathepsin J (334 aa).

A signal peptide spans 1–17; it reads MTPTVLLLILCFGVASG. A propeptide spans 18-113 (activation peptide); sequence AQAHDPKLDA…PHAQNHVSIG (96 aa). Residue Asn72 is glycosylated (N-linked (GlcNAc...) asparagine). 2 cysteine pairs are disulfide-bonded: Cys135–Cys178 and Cys169–Cys211. Cys138 is a catalytic residue. 3 N-linked (GlcNAc...) asparagine glycosylation sites follow: Asn217, Asn221, and Asn268. Cys269 and Cys322 are joined by a disulfide. Active-site residues include His276 and Asn300.

It belongs to the peptidase C1 family. As to expression, expressed specifically in placenta.

It is found in the lysosome. The protein is Cathepsin J (Ctsj) of Mus musculus (Mouse).